Here is a 1183-residue protein sequence, read N- to C-terminus: Spermatogenesis-associated protein 31G1 (1183 aa).

Disordered stretches follow at residues 109–153, 469–555, 661–686, 843–884, 973–1032, and 1048–1087; these read TPIG…FPTF, LMPA…SPWA, TVDD…SSEP, ASQG…VSEV, CLHS…TGLL, and QKRG…PAEA. Residues 124–134 show a composition bias toward basic and acidic residues; that stretch reads CRSEGRPRATE. The span at 135–153 shows a compositional bias: polar residues; sequence TQEQVLIQSPSPSRSFPTF. The segment covering 487-509 has biased composition (basic and acidic residues); the sequence is NPKERLSAPKDVRENLGYREHPH. Polar residues predominate over residues 671–685; the sequence is TGKNTDNTKKCSSSE. A compositionally biased stretch (pro residues) spans 847–858; sequence PNPPAVNPPQPT. Polar residues predominate over residues 975–984; it reads HSSSQPQAQA. The segment covering 993-1002 has biased composition (basic residues); it reads QKSKRLKRKA. The segment covering 1069–1079 has biased composition (polar residues); sequence SPTNTRENNPA.

As to expression, expressed in kidney and testis. Expressed at lower levels in stomach, intestine, epididymis and ovary. Expressed at very low levels in heart and spleen.

Dispensable for normal development and fertility. This chain is Spermatogenesis-associated protein 31G1 (Spata31g1), found in Mus musculus (Mouse).